Consider the following 90-residue polypeptide: Auxin-responsive protein SAUR19 (90 aa).

It belongs to the ARG7 family. Interacts with and inhibits PP2C-D subfamily of type 2C phosphatases such as PP2C67/PP2C-D1, PP2C64/PP2C-D5 and PP2C46/PP2C-D6.

Its subcellular location is the cell membrane. Its function is as follows. Provide a mechanistic link between auxin and plasma membrane H(+)-ATPases (PM H(+)-ATPases, e.g. AHA1 and AHA2), and triggers PM H(+)-ATPases activity by promoting phosphorylation of their C-terminal autoinhibitory domain as a result of PP2C-D subfamily of type 2C phosphatases inhibition, thus leading to the acidification of the apoplast and the facilitation of solutes and water uptake to drive cell expansion. Prevents the apical hook maintenance of etiolated seedlings. Functions as positive effectors of cell expansion through modulation of auxin transport. The protein is Auxin-responsive protein SAUR19 of Arabidopsis thaliana (Mouse-ear cress).